Reading from the N-terminus, the 187-residue chain is RNA pyrophosphohydrolase (187 aa).

Residues 6–149 (GYRANVGIIL…KRQVYRLALT (144 aa)) form the Nudix hydrolase domain. Residues 38–59 (GGIKSGETPTQAMYRELAEETG) carry the Nudix box motif.

Belongs to the Nudix hydrolase family. RppH subfamily. A divalent metal cation is required as a cofactor.

Its function is as follows. Accelerates the degradation of transcripts by removing pyrophosphate from the 5'-end of triphosphorylated RNA, leading to a more labile monophosphorylated state that can stimulate subsequent ribonuclease cleavage. The protein is RNA pyrophosphohydrolase of Nitrosomonas eutropha (strain DSM 101675 / C91 / Nm57).